The following is a 200-amino-acid chain: Molybdenum cofactor guanylyltransferase (200 aa).

GTP is bound by residues 10-12 (LAG), K23, N51, D69, and D99. Mg(2+) is bound at residue D99.

It belongs to the MobA family. In terms of assembly, monomer. Mg(2+) serves as cofactor.

The protein localises to the cytoplasm. The catalysed reaction is Mo-molybdopterin + GTP + H(+) = Mo-molybdopterin guanine dinucleotide + diphosphate. Transfers a GMP moiety from GTP to Mo-molybdopterin (Mo-MPT) cofactor (Moco or molybdenum cofactor) to form Mo-molybdopterin guanine dinucleotide (Mo-MGD) cofactor. This Shewanella halifaxensis (strain HAW-EB4) protein is Molybdenum cofactor guanylyltransferase.